The following is a 488-amino-acid chain: IQ domain-containing protein IQM1 (488 aa).

The segment at 20 to 46 (RTNSFKRDDTNRHQNSPKSTMERSLSF) is disordered. The segment covering 32–46 (HQNSPKSTMERSLSF) has biased composition (polar residues). An IQ domain is found at 106–135 (LDAAATTLQKVYKSYRTRRNLADCAVVVEE). 2 disordered regions span residues 377–403 (SFKS…EKEE) and 448–472 (SPRV…VRVS). Basic and acidic residues predominate over residues 388-403 (RKEVSEEVEIPSEKEE).

In terms of assembly, interacts (via IQ domain) with CAM5. In terms of tissue distribution, highly expressed in leaf mesophyll cells. Expressed in roots, rosette and cauline leaves, stems, flowers and siliques.

The protein localises to the cytoplasm. It localises to the nucleus. Its function is as follows. Involved in the modulation of stomatal movement. Promotes stomatal opening. May play a role in the regulation of chitin signaling. May be involved in biotic and abiotic stress responses. The sequence is that of IQ domain-containing protein IQM1 from Arabidopsis thaliana (Mouse-ear cress).